The following is a 329-amino-acid chain: Malate dehydrogenase (329 aa).

An NAD(+)-binding site is contributed by 11-17 (GAAGQIA). Substrate-binding residues include Arg-92 and Arg-98. Residues Asn-105, Gln-112, and 129–131 (VGN) each bind NAD(+). 2 residues coordinate substrate: Asn-131 and Arg-162. His-187 serves as the catalytic Proton acceptor.

This sequence belongs to the LDH/MDH superfamily. MDH type 2 family.

It carries out the reaction (S)-malate + NAD(+) = oxaloacetate + NADH + H(+). Functionally, catalyzes the reversible oxidation of malate to oxaloacetate. This is Malate dehydrogenase from Akkermansia muciniphila (strain ATCC BAA-835 / DSM 22959 / JCM 33894 / BCRC 81048 / CCUG 64013 / CIP 107961 / Muc).